The following is a 265-amino-acid chain: Phosphonates import ATP-binding protein PhnC 1 (265 aa).

In terms of domain architecture, ABC transporter spans 3–247; it reads LRLSAIDLRH…HLDTLYANEQ (245 aa). 36 to 43 contacts ATP; that stretch reads GPSGAGKT.

The protein belongs to the ABC transporter superfamily. Phosphonates importer (TC 3.A.1.9.1) family. The complex is composed of two ATP-binding proteins (PhnC), two transmembrane proteins (PhnE) and a solute-binding protein (PhnD).

It is found in the cell inner membrane. It carries out the reaction phosphonate(out) + ATP + H2O = phosphonate(in) + ADP + phosphate + H(+). In terms of biological role, part of the ABC transporter complex PhnCDE involved in phosphonates import. Responsible for energy coupling to the transport system. In Pseudomonas syringae pv. tomato (strain ATCC BAA-871 / DC3000), this protein is Phosphonates import ATP-binding protein PhnC 1.